Consider the following 582-residue polypeptide: Formate--tetrahydrofolate ligase (582 aa).

Residue 65-72 (TPLGEGKT) coordinates ATP.

The protein belongs to the formate--tetrahydrofolate ligase family.

The enzyme catalyses (6S)-5,6,7,8-tetrahydrofolate + formate + ATP = (6R)-10-formyltetrahydrofolate + ADP + phosphate. The protein operates within one-carbon metabolism; tetrahydrofolate interconversion. This chain is Formate--tetrahydrofolate ligase, found in Vibrio vulnificus (strain CMCP6).